Here is a 155-residue protein sequence, read N- to C-terminus: Transmembrane protein C1orf162 (155 aa).

The tract at residues 1–28 (MGGNGSTCKPDTERQGTLSTAAPTTSPA) is disordered. The span at 19-28 (STAAPTTSPA) shows a compositional bias: low complexity. Residues 41–61 (ILAFCAGVLLTLLLIAFIFLI) form a helical membrane-spanning segment. The interval 92-114 (ADHSKPQAPDPHSDPPAKLSSIP) is disordered. S140 carries the phosphoserine modification.

It localises to the membrane. The sequence is that of Transmembrane protein C1orf162 (C1orf162) from Homo sapiens (Human).